Consider the following 99-residue polypeptide: Probable small ribosomal subunit protein cS23 (99 aa).

Belongs to the chloroplast-specific ribosomal protein cS23 family. In terms of assembly, part of the 30S ribosomal subunit.

Probably a ribosomal protein or a ribosome-associated protein. The protein is Probable small ribosomal subunit protein cS23 of Synechococcus sp. (strain JA-2-3B'a(2-13)) (Cyanobacteria bacterium Yellowstone B-Prime).